Reading from the N-terminus, the 286-residue chain is MAGAKEIRSKIASIKSTQKITSAMEKVAVSKMRKAQMRMAASRPYAERIRQVIGHLANANPEYRHPFMIDRAIKRVGYVVVSSDRGLCGGLNTNLFKALVKDMAVNREQGVEIDLCVVGSKGAAFFRNFGGNVVAAISHLGEEPSINDLIGSVKVMLDAYLEGRIDRLSVVSNKFINTMTQQPTVEQLIPLEATPDQELKHHWDYLYEPDAKELLDGLMVRYVESQVYQAVVENNAAEQAARMIAMKNATDNAGDLISDLQLIYNKARQAAITQEISEIVGGAAAV.

It belongs to the ATPase gamma chain family. In terms of assembly, F-type ATPases have 2 components, CF(1) - the catalytic core - and CF(0) - the membrane proton channel. CF(1) has five subunits: alpha(3), beta(3), gamma(1), delta(1), epsilon(1). CF(0) has three main subunits: a, b and c.

It is found in the cell inner membrane. Functionally, produces ATP from ADP in the presence of a proton gradient across the membrane. The gamma chain is believed to be important in regulating ATPase activity and the flow of protons through the CF(0) complex. In Pseudomonas fluorescens (strain ATCC BAA-477 / NRRL B-23932 / Pf-5), this protein is ATP synthase gamma chain.